A 545-amino-acid polypeptide reads, in one-letter code: Pseudouridylate synthase RPUSD2 (545 aa).

The interval 48–121 (GLRASHQQNG…PPPKKRRTGV (74 aa)) is disordered. Serine 68 is modified (phosphoserine). The active site involves aspartate 274. Threonine 477 is subject to Phosphothreonine.

It belongs to the pseudouridine synthase RluA family.

It catalyses the reaction a uridine in mRNA = a pseudouridine in mRNA. Functionally, pseudouridine synthase that catalyzes pseudouridylation of mRNAs. This Homo sapiens (Human) protein is Pseudouridylate synthase RPUSD2.